The following is a 99-amino-acid chain: Protein Tat (99 aa).

Positions 1–22 (MDPVDPNLEPWNHPGSQPRTPC) are disordered. Residues 1 to 24 (MDPVDPNLEPWNHPGSQPRTPCNK) are interaction with human CREBBP. Residues 1-48 (MDPVDPNLEPWNHPGSQPRTPCNKCHCKKCCYHCPVCFLNKGLGISYG) form a transactivation region. The Zn(2+) site is built by Cys-22, Cys-25, and Cys-27. The cysteine-rich stretch occupies residues 22-37 (CNKCHCKKCCYHCPVC). Lys-28 is subject to N6-acetyllysine; by host PCAF. Positions 30, 33, 34, and 37 each coordinate Zn(2+). Positions 38–48 (FLNKGLGISYG) are core. The disordered stretch occupies residues 48–99 (GRKKRRQRRGPPQGGQAHQVPIPKQPSSQPRGDPTGPKEQKKKVESEAETDP). The Nuclear localization signal, RNA-binding (TAR), and protein transduction motif lies at 49-57 (RKKRRQRRG). The tract at residues 49–86 (RKKRRQRRGPPQGGQAHQVPIPKQPSSQPRGDPTGPKE) is interaction with the host capping enzyme RNGTT. N6-acetyllysine; by host EP300 and GCN5L2 occurs at positions 50 and 51. Arg-52 and Arg-53 each carry asymmetric dimethylarginine; by host PRMT6. Residue Lys-71 forms a Glycyl lysine isopeptide (Lys-Gly) (interchain with G-Cter in ubiquitin) linkage. The short motif at 78–80 (RGD) is the Cell attachment site element. The span at 83 to 93 (GPKEQKKKVES) shows a compositional bias: basic and acidic residues.

This sequence belongs to the lentiviruses Tat family. As to quaternary structure, interacts with host CCNT1. Associates with the P-TEFb complex composed at least of Tat, P-TEFb (CDK9 and CCNT1), TAR RNA, RNA Pol II. Recruits the HATs CREBBP, TAF1/TFIID, EP300, PCAF and GCN5L2. Interacts with host KAT5/Tip60; this interaction targets the latter to degradation. Interacts with the host deacetylase SIRT1. Interacts with host capping enzyme RNGTT; this interaction stimulates RNGTT. Binds to host KDR, and to the host integrins ITGAV/ITGB3 and ITGA5/ITGB1. Interacts with host KPNB1/importin beta-1 without previous binding to KPNA1/importin alpha-1. Interacts with EIF2AK2. Interacts with host nucleosome assembly protein NAP1L1; this interaction may be required for the transport of Tat within the nucleus, since the two proteins interact at the nuclear rim. Interacts with host C1QBP/SF2P32; this interaction involves lysine-acetylated Tat. Interacts with the host chemokine receptors CCR2, CCR3 and CXCR4. Interacts with host DPP4/CD26; this interaction may trigger an anti-proliferative effect. Interacts with host LDLR. Interacts with the host extracellular matrix metalloproteinase MMP1. Interacts with host PRMT6; this interaction mediates Tat's methylation. Interacts with, and is ubiquitinated by MDM2/Hdm2. Interacts with host PSMC3 and HTATIP2. Interacts with STAB1; this interaction may overcome SATB1-mediated repression of IL2 and IL2RA (interleukin) in T cells by binding to the same domain than HDAC1. Interacts (when acetylated) with human CDK13, thereby increasing HIV-1 mRNA splicing and promoting the production of the doubly spliced HIV-1 protein Nef. Interacts with host TBP; this interaction modulates the activity of transcriptional pre-initiation complex. Interacts with host RELA. Interacts with host PLSCR1; this interaction negatively regulates Tat transactivation activity by altering its subcellular distribution. Post-translationally, asymmetrical arginine methylation by host PRMT6 seems to diminish the transactivation capacity of Tat and affects the interaction with host CCNT1. In terms of processing, acetylation by EP300, CREBBP, GCN5L2/GCN5 and PCAF regulates the transactivation activity of Tat. EP300-mediated acetylation of Lys-50 promotes dissociation of Tat from the TAR RNA through the competitive binding to PCAF's bromodomain. In addition, the non-acetylated Tat's N-terminus can also interact with PCAF. PCAF-mediated acetylation of Lys-28 enhances Tat's binding to CCNT1. Lys-50 is deacetylated by SIRT1. Polyubiquitination by host MDM2 does not target Tat to degradation, but activates its transactivation function and fosters interaction with CCNT1 and TAR RNA. Post-translationally, phosphorylated by EIF2AK2 on serine and threonine residues adjacent to the basic region important for TAR RNA binding and function. Phosphorylation of Tat by EIF2AK2 is dependent on the prior activation of EIF2AK2 by dsRNA.

Its subcellular location is the host nucleus. It is found in the host nucleolus. The protein localises to the host cytoplasm. The protein resides in the secreted. Functionally, transcriptional activator that increases RNA Pol II processivity, thereby increasing the level of full-length viral transcripts. Recognizes a hairpin structure at the 5'-LTR of the nascent viral mRNAs referred to as the transactivation responsive RNA element (TAR) and recruits the cyclin T1-CDK9 complex (P-TEFb complex) that will in turn hyperphosphorylate the RNA polymerase II to allow efficient elongation. The CDK9 component of P-TEFb and other Tat-activated kinases hyperphosphorylate the C-terminus of RNA Pol II that becomes stabilized and much more processive. Other factors such as HTATSF1/Tat-SF1, SUPT5H/SPT5, and HTATIP2 are also important for Tat's function. Besides its effect on RNA Pol II processivity, Tat induces chromatin remodeling of proviral genes by recruiting the histone acetyltransferases (HATs) CREBBP, EP300 and PCAF to the chromatin. This also contributes to the increase in proviral transcription rate, especially when the provirus integrates in transcriptionally silent region of the host genome. To ensure maximal activation of the LTR, Tat mediates nuclear translocation of NF-kappa-B by interacting with host RELA. Through its interaction with host TBP, Tat may also modulate transcription initiation. Tat can reactivate a latently infected cell by penetrating in it and transactivating its LTR promoter. In the cytoplasm, Tat is thought to act as a translational activator of HIV-1 mRNAs. Extracellular circulating Tat can be endocytosed by surrounding uninfected cells via the binding to several surface receptors such as CD26, CXCR4, heparan sulfate proteoglycans (HSPG) or LDLR. Neurons are rarely infected, but they internalize Tat via their LDLR. Through its interaction with nuclear HATs, Tat is potentially able to control the acetylation-dependent cellular gene expression. Modulates the expression of many cellular genes involved in cell survival, proliferation or in coding for cytokines or cytokine receptors. Tat plays a role in T-cell and neurons apoptosis. Tat induced neurotoxicity and apoptosis probably contribute to neuroAIDS. Circulating Tat also acts as a chemokine-like and/or growth factor-like molecule that binds to specific receptors on the surface of the cells, affecting many cellular pathways. In the vascular system, Tat binds to ITGAV/ITGB3 and ITGA5/ITGB1 integrins dimers at the surface of endothelial cells and competes with bFGF for heparin-binding sites, leading to an excess of soluble bFGF. In Homo sapiens (Human), this protein is Protein Tat.